Here is a 581-residue protein sequence, read N- to C-terminus: Arginine--tRNA ligase (581 aa).

Positions 122-132 (PNVAKPMHVGH) match the 'HIGH' region motif.

The protein belongs to the class-I aminoacyl-tRNA synthetase family. Monomer.

Its subcellular location is the cytoplasm. The enzyme catalyses tRNA(Arg) + L-arginine + ATP = L-arginyl-tRNA(Arg) + AMP + diphosphate. The protein is Arginine--tRNA ligase of Francisella tularensis subsp. tularensis (strain FSC 198).